Here is a 1397-residue protein sequence, read N- to C-terminus: Centlein (1397 aa).

Disordered regions lie at residues 1–43 (MAAR…GLAG) and 56–76 (LWRG…GAAV). A2 is subject to N-acetylalanine. Phosphoserine is present on residues S5, S9, and S22. Coiled-coil stretches lie at residues 95–126 (EEAK…KEFV) and 405–481 (VVNL…KLMA). Disordered regions lie at residues 422-449 (LKEK…SGKA) and 485-521 (CDQD…SEEL). Basic and acidic residues predominate over residues 485–503 (CDQDFSEKGTEGKHKEPPV). Coiled coils occupy residues 674-778 (KNEK…KALR), 973-1114 (ISLR…MELL), and 1152-1299 (SESN…LKKM). S1219 carries the post-translational modification Phosphoserine. A Phosphothreonine modification is found at T1334.

As to quaternary structure, interacts with CEP250 and CEP68. Interacts with NEK2; the interaction leads to phosphorylation of CNTLN. Post-translationally, phosphorylated directly or indirectly by NEK2.

It is found in the cytoplasm. The protein localises to the cytoskeleton. It localises to the microtubule organizing center. The protein resides in the centrosome. Its subcellular location is the centriole. Its function is as follows. Required for centrosome cohesion and recruitment of CEP68 to centrosomes. The chain is Centlein from Mus musculus (Mouse).